The chain runs to 186 residues: Alkyl hydroperoxide reductase AhpD (186 aa).

C132 (proton donor) is an active-site residue. A disulfide bridge connects residues C132 and C135. The active-site Cysteine sulfenic acid (-SOH) intermediate is C135.

It belongs to the AhpD family.

The enzyme catalyses N(6)-[(R)-dihydrolipoyl]-L-lysyl-[lipoyl-carrier protein] + a hydroperoxide = N(6)-[(R)-lipoyl]-L-lysyl-[lipoyl-carrier protein] + an alcohol + H2O. Functionally, antioxidant protein with alkyl hydroperoxidase activity. Required for the reduction of the AhpC active site cysteine residues and for the regeneration of the AhpC enzyme activity. This is Alkyl hydroperoxide reductase AhpD from Anaeromyxobacter dehalogenans (strain 2CP-C).